Consider the following 277-residue polypeptide: Carbonyl reductase [NADPH] 1 (277 aa).

Serine 2 bears the N-acetylserine mark. Serine 2 is modified (phosphoserine). Residues 10–34 (VTGA…GDVV), 63–64 (DI), and asparagine 90 each bind NADP(+). Residues 95-97 (FKV) and glutamine 106 contribute to the glutathione site. Serine 140 is a substrate binding site. Glutathione is bound at residue 193-194 (AY). Residue tyrosine 194 is the Proton acceptor of the active site. NADP(+)-binding positions include 194 to 198 (YGVTK) and 231 to 233 (VRT). Position 239 is an N6-1-carboxyethyl lysine (lysine 239). The disordered stretch occupies residues 258 to 277 (PPGAEGPHGQFVQDKKVEPW).

This sequence belongs to the short-chain dehydrogenases/reductases (SDR) family. As to quaternary structure, monomer.

It is found in the cytoplasm. It catalyses the reaction a secondary alcohol + NADP(+) = a ketone + NADPH + H(+). It carries out the reaction prostaglandin F2alpha + NADP(+) = prostaglandin E2 + NADPH + H(+). The enzyme catalyses prostaglandin E1 + NADP(+) = 15-oxoprostaglandin E1 + NADPH + H(+). The catalysed reaction is menadione + NADPH + H(+) = menadiol + NADP(+). It catalyses the reaction prostaglandin D2 + NADP(+) = 15-oxoprostaglandin D2 + NADPH + H(+). It carries out the reaction prostaglandin E2 + NADP(+) = 15-oxoprostaglandin E2 + NADPH + H(+). The enzyme catalyses prostaglandin F2alpha + NADP(+) = 15-oxoprostaglandin F2alpha + NADPH + H(+). The catalysed reaction is daunorubicin + NADPH + H(+) = 13-dihydrodaunorubicin + NADP(+). It catalyses the reaction S-nitrosoglutathione + NADPH + H(+) = S-(hydroxysulfenamide)glutathione + NADP(+). It carries out the reaction a primary alcohol + NADP(+) = an aldehyde + NADPH + H(+). The enzyme catalyses cortisol + NADPH + H(+) = 20beta-dihydrocortisol + NADP(+). The catalysed reaction is corticosterone + NADPH + H(+) = 20beta-dihydrocorticosterone + NADP(+). Its function is as follows. NADPH-dependent reductase with broad substrate specificity. Catalyzes the reduction of a wide variety of carbonyl compounds including quinones, prostaglandins, menadione, plus various xenobiotics. Catalyzes the reduction of the antitumor anthracyclines doxorubicin and daunorubicin to the cardiotoxic compounds doxorubicinol and daunorubicinol. Can convert prostaglandin E to prostaglandin F2-alpha. Can bind glutathione, which explains its higher affinity for glutathione-conjugated substrates. Catalyzes the reduction of S-nitrosoglutathione. In addition, participates in the glucocorticoid metabolism by catalyzing the NADPH-dependent cortisol/corticosterone into 20beta-dihydrocortisol (20b-DHF) or 20beta-corticosterone (20b-DHB), which are weak agonists of NR3C1 and NR3C2 in adipose tissue. In Rattus norvegicus (Rat), this protein is Carbonyl reductase [NADPH] 1.